The following is a 241-amino-acid chain: MKGFFAGVVAAATLAVASAGDYCGQWDWAKSTNYIVYNNLWNKNAAASGSQCTGVDKISGSTIAWHTSYTWTGGAATEVKSYSNAALVFSKKQIKNIKSIPTKMKYSYSHSSGTFVADVSYDLFTSSTASGSNEYEIMIWLAAYGGAGPISSTGKAIATVTIGSNSFKLYKGPNGSTTVFSFVATKTITNFSADLQKFLSYLTKNQGLPSSQYLITLEAGTEPFVGTNAKMTVSSFSAAVN.

The signal sequence occupies residues 1-19 (MKGFFAGVVAAATLAVASA). Residue Glu-136 is part of the active site. N-linked (GlcNAc...) asparagine glycosylation is found at Asn-174 and Asn-190. Glu-222 is a catalytic residue.

Belongs to the glycosyl hydrolase 12 (cellulase H) family. As to quaternary structure, interacts with host apoplastic glucanase inhibitor GIP1.

The protein localises to the secreted. Its subcellular location is the host. The catalysed reaction is xyloglucan + H2O = xyloglucan oligosaccharides.. The xyloglucanase activity is inhibited by the binding of the host apoplastic glucanase inhibitor GIP1. Functionally, glycoside hydrolase that exhibits xyloglucanase activity. Acts as an important virulence factor during P.sojae infection but also acts as a pathogen-associated molecular pattern (PAMP) in soybean and solanaceous species, where it can trigger defense responses including cell death. XEG1-induced cell death can be suppressed by P.sojae RxLR effectors. The PAMP activity is independent of its xyloglucanase activity. XEG1 induces plant defense responses in a RLP kinase Serk3/Bak1-dependent manner in Nicotiana benthamiana. Moreover, the perception of XEG1 occurs independently of the perception of ethylene-inducing xylanase Eix2 in Tomato. With truncated paralog XLP1, is required to elevate apoplastic sugar during P.sojae infection. This chain is Xyloglucan-specific endo-beta-1,4-glucanase 1, found in Phytophthora sojae (strain P6497) (Soybean stem and root rot agent).